A 208-amino-acid polypeptide reads, in one-letter code: LexA repressor (208 aa).

Positions 28–48 (RAEIARELGFRSANAAEEHLK) form a DNA-binding region, H-T-H motif. Active-site for autocatalytic cleavage activity residues include Ser125 and Lys162.

Belongs to the peptidase S24 family. Homodimer.

It carries out the reaction Hydrolysis of Ala-|-Gly bond in repressor LexA.. Represses a number of genes involved in the response to DNA damage (SOS response), including recA and lexA. In the presence of single-stranded DNA, RecA interacts with LexA causing an autocatalytic cleavage which disrupts the DNA-binding part of LexA, leading to derepression of the SOS regulon and eventually DNA repair. The polypeptide is LexA repressor (Aliivibrio fischeri (strain MJ11) (Vibrio fischeri)).